The sequence spans 702 residues: Ribosomal RNA large subunit methyltransferase K/L (702 aa).

Residues 43–154 form the THUMP domain; the sequence is LIYQSLMWSR…KETASIALDL (112 aa).

It belongs to the methyltransferase superfamily. RlmKL family.

The protein localises to the cytoplasm. It catalyses the reaction guanosine(2445) in 23S rRNA + S-adenosyl-L-methionine = N(2)-methylguanosine(2445) in 23S rRNA + S-adenosyl-L-homocysteine + H(+). It carries out the reaction guanosine(2069) in 23S rRNA + S-adenosyl-L-methionine = N(2)-methylguanosine(2069) in 23S rRNA + S-adenosyl-L-homocysteine + H(+). Its function is as follows. Specifically methylates the guanine in position 2445 (m2G2445) and the guanine in position 2069 (m7G2069) of 23S rRNA. The sequence is that of Ribosomal RNA large subunit methyltransferase K/L from Salmonella gallinarum (strain 287/91 / NCTC 13346).